Consider the following 354-residue polypeptide: Methylthioribose-1-phosphate isomerase (354 aa).

Substrate contacts are provided by residues 58 to 60, Arg-101, and Gln-204; that span reads RGA. The active-site Proton donor is Asp-245. 255–256 is a substrate binding site; sequence NK.

This sequence belongs to the eIF-2B alpha/beta/delta subunits family. MtnA subfamily.

The enzyme catalyses 5-(methylsulfanyl)-alpha-D-ribose 1-phosphate = 5-(methylsulfanyl)-D-ribulose 1-phosphate. It functions in the pathway amino-acid biosynthesis; L-methionine biosynthesis via salvage pathway; L-methionine from S-methyl-5-thio-alpha-D-ribose 1-phosphate: step 1/6. Catalyzes the interconversion of methylthioribose-1-phosphate (MTR-1-P) into methylthioribulose-1-phosphate (MTRu-1-P). The polypeptide is Methylthioribose-1-phosphate isomerase (Xanthomonas axonopodis pv. citri (strain 306)).